We begin with the raw amino-acid sequence, 179 residues long: GTP-dependent dephospho-CoA kinase (179 aa).

Residues D55, V57, D74, K76, and E128 each coordinate GTP.

Belongs to the GTP-dependent DPCK family.

It carries out the reaction 3'-dephospho-CoA + GTP = GDP + CoA + H(+). The protein operates within cofactor biosynthesis; coenzyme A biosynthesis. In terms of biological role, catalyzes the GTP-dependent phosphorylation of the 3'-hydroxyl group of dephosphocoenzyme A to form coenzyme A (CoA). In Saccharolobus islandicus (strain M.16.4 / Kamchatka #3) (Sulfolobus islandicus), this protein is GTP-dependent dephospho-CoA kinase.